A 350-amino-acid polypeptide reads, in one-letter code: 4-hydroxy-3-methylbut-2-enyl diphosphate reductase (350 aa).

C19 contributes to the [4Fe-4S] cluster binding site. (2E)-4-hydroxy-3-methylbut-2-enyl diphosphate-binding residues include H48 and H84. Dimethylallyl diphosphate contacts are provided by H48 and H84. 2 residues coordinate isopentenyl diphosphate: H48 and H84. C106 serves as a coordination point for [4Fe-4S] cluster. H134 contacts (2E)-4-hydroxy-3-methylbut-2-enyl diphosphate. Residue H134 participates in dimethylallyl diphosphate binding. H134 lines the isopentenyl diphosphate pocket. The active-site Proton donor is E136. Residue T175 participates in (2E)-4-hydroxy-3-methylbut-2-enyl diphosphate binding. C205 lines the [4Fe-4S] cluster pocket. 4 residues coordinate (2E)-4-hydroxy-3-methylbut-2-enyl diphosphate: S233, S234, N235, and S278. S233, S234, N235, and S278 together coordinate dimethylallyl diphosphate. Positions 233, 234, 235, and 278 each coordinate isopentenyl diphosphate.

Belongs to the IspH family. Requires [4Fe-4S] cluster as cofactor.

The catalysed reaction is isopentenyl diphosphate + 2 oxidized [2Fe-2S]-[ferredoxin] + H2O = (2E)-4-hydroxy-3-methylbut-2-enyl diphosphate + 2 reduced [2Fe-2S]-[ferredoxin] + 2 H(+). It carries out the reaction dimethylallyl diphosphate + 2 oxidized [2Fe-2S]-[ferredoxin] + H2O = (2E)-4-hydroxy-3-methylbut-2-enyl diphosphate + 2 reduced [2Fe-2S]-[ferredoxin] + 2 H(+). Its pathway is isoprenoid biosynthesis; dimethylallyl diphosphate biosynthesis; dimethylallyl diphosphate from (2E)-4-hydroxy-3-methylbutenyl diphosphate: step 1/1. It functions in the pathway isoprenoid biosynthesis; isopentenyl diphosphate biosynthesis via DXP pathway; isopentenyl diphosphate from 1-deoxy-D-xylulose 5-phosphate: step 6/6. Its function is as follows. Catalyzes the conversion of 1-hydroxy-2-methyl-2-(E)-butenyl 4-diphosphate (HMBPP) into a mixture of isopentenyl diphosphate (IPP) and dimethylallyl diphosphate (DMAPP). Acts in the terminal step of the DOXP/MEP pathway for isoprenoid precursor biosynthesis. In Brucella anthropi (strain ATCC 49188 / DSM 6882 / CCUG 24695 / JCM 21032 / LMG 3331 / NBRC 15819 / NCTC 12168 / Alc 37) (Ochrobactrum anthropi), this protein is 4-hydroxy-3-methylbut-2-enyl diphosphate reductase.